We begin with the raw amino-acid sequence, 330 residues long: Tetraacyldisaccharide 4'-kinase (330 aa).

Threonine 58–threonine 65 is an ATP binding site.

It belongs to the LpxK family.

The enzyme catalyses a lipid A disaccharide + ATP = a lipid IVA + ADP + H(+). It functions in the pathway glycolipid biosynthesis; lipid IV(A) biosynthesis; lipid IV(A) from (3R)-3-hydroxytetradecanoyl-[acyl-carrier-protein] and UDP-N-acetyl-alpha-D-glucosamine: step 6/6. Its function is as follows. Transfers the gamma-phosphate of ATP to the 4'-position of a tetraacyldisaccharide 1-phosphate intermediate (termed DS-1-P) to form tetraacyldisaccharide 1,4'-bis-phosphate (lipid IVA). This chain is Tetraacyldisaccharide 4'-kinase, found in Shewanella pealeana (strain ATCC 700345 / ANG-SQ1).